The sequence spans 171 residues: Protein GrpE (171 aa).

The interval 1-22 (MNHEQPDIESQQSAADAAATAG) is disordered.

It belongs to the GrpE family. Homodimer.

It localises to the cytoplasm. Participates actively in the response to hyperosmotic and heat shock by preventing the aggregation of stress-denatured proteins, in association with DnaK and GrpE. It is the nucleotide exchange factor for DnaK and may function as a thermosensor. Unfolded proteins bind initially to DnaJ; upon interaction with the DnaJ-bound protein, DnaK hydrolyzes its bound ATP, resulting in the formation of a stable complex. GrpE releases ADP from DnaK; ATP binding to DnaK triggers the release of the substrate protein, thus completing the reaction cycle. Several rounds of ATP-dependent interactions between DnaJ, DnaK and GrpE are required for fully efficient folding. This is Protein GrpE from Stenotrophomonas maltophilia (strain K279a).